Consider the following 741-residue polypeptide: Phosphoribosylformylglycinamidine synthase subunit PurL (741 aa).

Histidine 54 is an active-site residue. ATP-binding residues include tyrosine 57 and lysine 96. Glutamate 98 is a binding site for Mg(2+). Residues 99-102 (SHNH) and arginine 121 contribute to the substrate site. Histidine 100 serves as the catalytic Proton acceptor. Aspartate 122 contributes to the Mg(2+) binding site. A substrate-binding site is contributed by glutamine 245. Residue aspartate 273 coordinates Mg(2+). Substrate is bound at residue 317–319 (ESQ). ATP-binding residues include aspartate 500 and glycine 537. Position 538 (asparagine 538) interacts with Mg(2+). Serine 540 serves as a coordination point for substrate.

Belongs to the FGAMS family. Monomer. Part of the FGAM synthase complex composed of 1 PurL, 1 PurQ and 2 PurS subunits.

The protein resides in the cytoplasm. The enzyme catalyses N(2)-formyl-N(1)-(5-phospho-beta-D-ribosyl)glycinamide + L-glutamine + ATP + H2O = 2-formamido-N(1)-(5-O-phospho-beta-D-ribosyl)acetamidine + L-glutamate + ADP + phosphate + H(+). The protein operates within purine metabolism; IMP biosynthesis via de novo pathway; 5-amino-1-(5-phospho-D-ribosyl)imidazole from N(2)-formyl-N(1)-(5-phospho-D-ribosyl)glycinamide: step 1/2. In terms of biological role, part of the phosphoribosylformylglycinamidine synthase complex involved in the purines biosynthetic pathway. Catalyzes the ATP-dependent conversion of formylglycinamide ribonucleotide (FGAR) and glutamine to yield formylglycinamidine ribonucleotide (FGAM) and glutamate. The FGAM synthase complex is composed of three subunits. PurQ produces an ammonia molecule by converting glutamine to glutamate. PurL transfers the ammonia molecule to FGAR to form FGAM in an ATP-dependent manner. PurS interacts with PurQ and PurL and is thought to assist in the transfer of the ammonia molecule from PurQ to PurL. The protein is Phosphoribosylformylglycinamidine synthase subunit PurL of Shouchella clausii (strain KSM-K16) (Alkalihalobacillus clausii).